We begin with the raw amino-acid sequence, 450 residues long: Phosphomethylpyrimidine synthase (450 aa).

Substrate is bound by residues N80, M109, Y138, H173, 193 to 195 (SRG), 234 to 237 (DSLR), and E273. Residue H277 participates in Zn(2+) binding. Y300 provides a ligand contact to substrate. A Zn(2+)-binding site is contributed by H341. The [4Fe-4S] cluster site is built by C421, C424, and C429.

Belongs to the ThiC family. As to quaternary structure, homodimer. The cofactor is [4Fe-4S] cluster.

It catalyses the reaction 5-amino-1-(5-phospho-beta-D-ribosyl)imidazole + S-adenosyl-L-methionine = 4-amino-2-methyl-5-(phosphooxymethyl)pyrimidine + CO + 5'-deoxyadenosine + formate + L-methionine + 3 H(+). Its pathway is cofactor biosynthesis; thiamine diphosphate biosynthesis. Functionally, catalyzes the synthesis of the hydroxymethylpyrimidine phosphate (HMP-P) moiety of thiamine from aminoimidazole ribotide (AIR) in a radical S-adenosyl-L-methionine (SAM)-dependent reaction. This Campylobacter fetus subsp. fetus (strain 82-40) protein is Phosphomethylpyrimidine synthase.